A 94-amino-acid polypeptide reads, in one-letter code: Cell division topological specificity factor (94 aa).

Belongs to the MinE family.

Prevents the cell division inhibition by proteins MinC and MinD at internal division sites while permitting inhibition at polar sites. This ensures cell division at the proper site by restricting the formation of a division septum at the midpoint of the long axis of the cell. This chain is Cell division topological specificity factor, found in Acetivibrio thermocellus (strain ATCC 27405 / DSM 1237 / JCM 9322 / NBRC 103400 / NCIMB 10682 / NRRL B-4536 / VPI 7372) (Clostridium thermocellum).